A 314-amino-acid polypeptide reads, in one-letter code: MDPKNLNRHQVPNFLNPPPPPRNQGLVDDDAASAVVSDENRKPTTEIKDFQIVVSASDKEPNKKSQNQNQLGPKRSSNKDRHTKVEGRGRRIRMPALCAARIFQLTRELGHKSDGETIQWLLQQAEPSIIAATGSGTIPASALASSAATSNHHQGGSLTAGLMISHDLDGGSSSSGRPLNWGIGGGEGVSRSSLPTGLWPNVAGFGSGVPTTGLMSEGAGYRIGFPGFDFPGVGHMSFASILGGNHNQMPGLELGLSQEGNVGVLNPQSFTQIYQQMGQAQAQAQGRVLHHMHHNHEEHQQESGEKDDSQGSGR.

Disordered stretches follow at residues 1–91 and 295–314; these read MDPK…RGRR and NHEE…GSGR. 2 stretches are compositionally biased toward basic and acidic residues: residues 38 to 49 and 77 to 89; these read DENRKPTTEIKD and SNKD…EGRG. One can recognise a TCP domain in the interval 78–132; it reads NKDRHTKVEGRGRRIRMPALCAARIFQLTRELGHKSDGETIQWLLQQAEPSIIAA.

Interacts with PURA1. Interacts with SPL.

Its subcellular location is the nucleus. In terms of biological role, transcription factor that binds to the site II motif (3'-TGGGCC/T-5') in the promoter of PCNA-2 and to 3'-GCCCG/A-5' elements in the promoters of cyclin CYCB1-1 and ribosomal protein genes. The protein is Transcription factor TCP20 (TCP20) of Arabidopsis thaliana (Mouse-ear cress).